Here is a 51-residue protein sequence, read N- to C-terminus: Cuticle protein CP575 (51 aa).

A Chitin-binding type R&amp;R domain is found at 1–51 (GDIIDVDNDLFEHEQDGVAGTSVHGEYEAYDAYGNEYEVKYIADHLGFRVL).

In terms of tissue distribution, calcified shell.

The polypeptide is Cuticle protein CP575 (Cancer pagurus (Rock crab)).